A 379-amino-acid chain; its full sequence is Chaperone protein DnaJ (379 aa).

The 66-residue stretch at 5-70 (DYYELLEVSR…QKRAAYDQFG (66 aa)) folds into the J domain. The segment at 135–213 (GKEVEITVPR…CHGQGRVRES (79 aa)) adopts a CR-type zinc-finger fold. Zn(2+) contacts are provided by Cys148, Cys151, Cys165, Cys168, Cys187, Cys190, Cys201, and Cys204. CXXCXGXG motif repeat units lie at residues 148-155 (CTVCEGSG), 165-172 (CETCQGMG), 187-194 (CPTCHGEG), and 201-208 (CASCHGQG).

Belongs to the DnaJ family. In terms of assembly, homodimer. Zn(2+) is required as a cofactor.

It localises to the cytoplasm. In terms of biological role, participates actively in the response to hyperosmotic and heat shock by preventing the aggregation of stress-denatured proteins and by disaggregating proteins, also in an autonomous, DnaK-independent fashion. Unfolded proteins bind initially to DnaJ; upon interaction with the DnaJ-bound protein, DnaK hydrolyzes its bound ATP, resulting in the formation of a stable complex. GrpE releases ADP from DnaK; ATP binding to DnaK triggers the release of the substrate protein, thus completing the reaction cycle. Several rounds of ATP-dependent interactions between DnaJ, DnaK and GrpE are required for fully efficient folding. Also involved, together with DnaK and GrpE, in the DNA replication of plasmids through activation of initiation proteins. This Legionella pneumophila (strain Lens) protein is Chaperone protein DnaJ.